We begin with the raw amino-acid sequence, 574 residues long: Sorting nexin-33 (574 aa).

In terms of domain architecture, SH3 spans 1–61 (MALKGRALYD…PASYVEIVRS (61 aa)). Residues 68–119 (ADYSSSPAGSPGAQVSLYNSPSVASPARSGGGSGFLSNQGSFEEDDDDDWDD) form a disordered region. A phosphoserine mark is found at Ser-77 and Ser-92. Over residues 109–119 (FEEDDDDDWDD) the composition is skewed to acidic residues. Positions 230–340 (FACSVEDPTK…HFLSCLDDKQ (111 aa)) constitute a PX domain. Positions 371–574 (LQDVEDRVDT…EKTLRMYDNL (204 aa)) constitute a BAR domain.

Belongs to the sorting nexin family. Homodimer (via BAR domain). Interacts with ADAM15. Interacts with FASLG. Interacts (via SH3 domain) with DNM1 and DNM2. Interacts with WASL. Interacts with FCHSD1 (via the F-BAR domain). Phosphorylated. In terms of tissue distribution, detected in heart and pancreas.

The protein resides in the cytoplasm. The protein localises to the cytosol. It localises to the membrane. Its subcellular location is the cytoplasmic vesicle membrane. Plays a role in the reorganization of the cytoskeleton, endocytosis and cellular vesicle trafficking via its interactions with membranes, WASL, DNM1 and DNM2. Acts both during interphase and at the end of mitotic cell divisions. Required for efficient progress through mitosis and cytokinesis. Required for normal formation of the cleavage furrow at the end of mitosis. Modulates endocytosis of cell-surface proteins, such as APP and PRNP; this then modulates the secretion of APP and PRNP peptides. Promotes membrane tubulation (in vitro). May promote the formation of macropinosomes. This Homo sapiens (Human) protein is Sorting nexin-33 (SNX33).